We begin with the raw amino-acid sequence, 256 residues long: Ribosomal RNA small subunit methyltransferase A (256 aa).

Residues N12, L14, G39, E60, D85, and N103 each contribute to the S-adenosyl-L-methionine site.

Belongs to the class I-like SAM-binding methyltransferase superfamily. rRNA adenine N(6)-methyltransferase family. RsmA subfamily.

It localises to the cytoplasm. It carries out the reaction adenosine(1518)/adenosine(1519) in 16S rRNA + 4 S-adenosyl-L-methionine = N(6)-dimethyladenosine(1518)/N(6)-dimethyladenosine(1519) in 16S rRNA + 4 S-adenosyl-L-homocysteine + 4 H(+). In terms of biological role, specifically dimethylates two adjacent adenosines (A1518 and A1519) in the loop of a conserved hairpin near the 3'-end of 16S rRNA in the 30S particle. May play a critical role in biogenesis of 30S subunits. This is Ribosomal RNA small subunit methyltransferase A from Legionella pneumophila (strain Corby).